Here is a 106-residue protein sequence, read N- to C-terminus: Cell division topological specificity factor (106 aa).

Belongs to the MinE family.

In terms of biological role, prevents the cell division inhibition by proteins MinC and MinD at internal division sites while permitting inhibition at polar sites. This ensures cell division at the proper site by restricting the formation of a division septum at the midpoint of the long axis of the cell. This is Cell division topological specificity factor from Prochlorococcus marinus (strain SARG / CCMP1375 / SS120).